Reading from the N-terminus, the 289-residue chain is Protein charybde (289 aa).

The disordered stretch occupies residues 119–142; it reads TAHHPGHGHGPGPSPMPASPLQST.

This sequence belongs to the DDIT4 family.

The protein localises to the cytoplasm. In terms of biological role, inhibits cell growth by regulating the Tor pathway upstream of the Tsc1-Tsc2 complex and downstream of Akt1. Acts as a cell death activator during head development. This chain is Protein charybde (chrb), found in Drosophila pseudoobscura pseudoobscura (Fruit fly).